The primary structure comprises 118 residues: V-type proton ATPase subunit G 2 (118 aa).

Positions 8 to 57 form a coiled coil; that stretch reads IQQLLQAEKRAAEKVADARKRKARRLKQAKEEAQMEVDQYRREREQEFQS. The interval 25–90 is disordered; sequence ARKRKARRLK…VQGMQSSQQR (66 aa). Over residues 35–55 the composition is skewed to basic and acidic residues; it reads QAKEEAQMEVDQYRREREQEF. Polar residues-rich tracts occupy residues 56–69 and 78–89; these read QSKQ…QGNL and RRQVQGMQSSQQ.

This sequence belongs to the V-ATPase G subunit family. V-ATPase is a heteromultimeric enzyme made up of two complexes: the ATP-hydrolytic V1 complex and the proton translocation V0 complex. The V1 complex consists of three catalytic AB heterodimers that form a heterohexamer, three peripheral stalks each consisting of EG heterodimers, one central rotor including subunits D and F, and the regulatory subunits C and H. The proton translocation complex V0 consists of the proton transport subunit a, a ring of proteolipid subunits c9c'', rotary subunit d, subunits e and f, and the accessory subunits ATP6AP1/Ac45 and ATP6AP2/PRR. As to expression, expressed in brain (at protein level).

It is found in the melanosome. The protein resides in the cytoplasmic vesicle. Its subcellular location is the clathrin-coated vesicle membrane. Functionally, subunit of the V1 complex of vacuolar(H+)-ATPase (V-ATPase), a multisubunit enzyme composed of a peripheral complex (V1) that hydrolyzes ATP and a membrane integral complex (V0) that translocates protons. V-ATPase is responsible for acidifying and maintaining the pH of intracellular compartments and in some cell types, is targeted to the plasma membrane, where it is responsible for acidifying the extracellular environment. In Bos taurus (Bovine), this protein is V-type proton ATPase subunit G 2.